The following is a 410-amino-acid chain: LanC-like protein GCR2 (410 aa).

Residues C283, C328, and H329 each contribute to the Zn(2+) site.

Belongs to the LanC-like protein family. In terms of assembly, may interact (via C-terminus) with GPA1.

Functionally, may play a role in abscisic acid (ABA) signaling. The chain is LanC-like protein GCR2 (GCR2) from Arabidopsis thaliana (Mouse-ear cress).